The following is a 102-amino-acid chain: Large ribosomal subunit protein bL21 (102 aa).

A compositionally biased stretch (basic residues) spans 80-91 (KNSKRKKGHRQP). The disordered stretch occupies residues 80–102 (KNSKRKKGHRQPYTKLTIDKINA).

It belongs to the bacterial ribosomal protein bL21 family. In terms of assembly, part of the 50S ribosomal subunit. Contacts protein L20.

This protein binds to 23S rRNA in the presence of protein L20. In Staphylococcus aureus (strain Mu3 / ATCC 700698), this protein is Large ribosomal subunit protein bL21.